Here is a 100-residue protein sequence, read N- to C-terminus: Urease subunit gamma (100 aa).

The protein belongs to the urease gamma subunit family. As to quaternary structure, heterotrimer of UreA (gamma), UreB (beta) and UreC (alpha) subunits. Three heterotrimers associate to form the active enzyme.

The protein resides in the cytoplasm. The catalysed reaction is urea + 2 H2O + H(+) = hydrogencarbonate + 2 NH4(+). The protein operates within nitrogen metabolism; urea degradation; CO(2) and NH(3) from urea (urease route): step 1/1. This Nitrosospira multiformis (strain ATCC 25196 / NCIMB 11849 / C 71) protein is Urease subunit gamma.